Consider the following 279-residue polypeptide: Eukaryotic translation initiation factor 3 subunit J (279 aa).

2 disordered regions span residues 1–74 (MSWD…SQKS) and 229–279 (ERQA…DDFM). Over residues 20–39 (WEDEDNDDPLLESWDIDEEE) the composition is skewed to acidic residues. Residues 34–74 (DIDEEEVARKKKEEEAKKKAEKEALKQKQQEAKNKKLSQKS) adopt a coiled-coil conformation. Residues 40–67 (VARKKKEEEAKKKAEKEALKQKQQEAKN) show a composition bias toward basic and acidic residues. A compositionally biased stretch (acidic residues) spans 268–279 (DDFDDFDDDDFM).

It belongs to the eIF-3 subunit J family. As to quaternary structure, component of the eukaryotic translation initiation factor 3 (eIF-3) complex.

The protein localises to the cytoplasm. Component of the eukaryotic translation initiation factor 3 (eIF-3) complex, which is involved in protein synthesis of a specialized repertoire of mRNAs and, together with other initiation factors, stimulates binding of mRNA and methionyl-tRNAi to the 40S ribosome. The eIF-3 complex specifically targets and initiates translation of a subset of mRNAs involved in cell proliferation. The polypeptide is Eukaryotic translation initiation factor 3 subunit J (Meyerozyma guilliermondii (strain ATCC 6260 / CBS 566 / DSM 6381 / JCM 1539 / NBRC 10279 / NRRL Y-324) (Yeast)).